The following is a 964-amino-acid chain: uncharacterized protein (964 aa).

Residues 97 to 117 (DSESDVGSDAESDAESDAESD) are compositionally biased toward acidic residues. Positions 97–208 (DSESDVGSDA…SNSIDNESES (112 aa)) are disordered. Low complexity predominate over residues 121 to 148 (HTQNNTNTPINNITLINLDSSNNSTQSD). Over residues 149–163 (NESDNESDNESDNES) the composition is skewed to acidic residues. Positions 192–203 (NSDNIGNSNSID) are enriched in low complexity.

This is an uncharacterized protein from Acanthamoeba polyphaga (Amoeba).